Reading from the N-terminus, the 152-residue chain is Protein FYV5 (152 aa).

5 consecutive transmembrane segments (helical) span residues 26–46 (IISI…RICS), 56–76 (LISS…SCVL), 82–102 (VGII…VLFL), 106–126 (LIDL…TPFF), and 127–147 (FMLH…YLII).

The protein localises to the cell membrane. It is found in the secreted. It localises to the cell wall. Its function is as follows. Involved in maintaining an adequate ionic strength homeostasis of the cellular aqueous environment, necessary for normal growth rate. Required for survival upon exposure to K1 killer toxin and hence plays a role in cell wall glucan synthesis. Required for dithiothreitol (DTT) resistance. Involved in cell cycle progression. This Saccharomyces cerevisiae (strain ATCC 204508 / S288c) (Baker's yeast) protein is Protein FYV5 (FYV5).